Here is a 482-residue protein sequence, read N- to C-terminus: Protein farnesyltransferase subunit beta (482 aa).

PFTB repeat units follow at residues E131 to G172, R182 to N223, T230 to N271, and L278 to Q319. (2E,6E)-farnesyl diphosphate contacts are provided by residues H256–Y259 and R298–K301. The Zn(2+) site is built by D304 and C306. Residue Y307 to W310 coordinates (2E,6E)-farnesyl diphosphate. A disordered region spans residues V329 to H372. Residues E348 to S368 show a composition bias toward acidic residues. One copy of the PFTB 5 repeat lies at S391–Q433. Residue H421 participates in Zn(2+) binding.

It belongs to the protein prenyltransferase subunit beta family. In terms of assembly, heterodimer of FTA and FTB (farnesyltransferase). Heterodimer of an alpha and a beta subunit. Zn(2+) is required as a cofactor.

The catalysed reaction is L-cysteinyl-[protein] + (2E,6E)-farnesyl diphosphate = S-(2E,6E)-farnesyl-L-cysteinyl-[protein] + diphosphate. Functionally, catalyzes the transfer of a farnesyl moiety from farnesyl diphosphate to a cysteine at the fourth position from the C-terminus of several proteins having the C-terminal sequence Cys-aliphatic-aliphatic-X (CaaX). The beta subunit is responsible for peptide-binding. Acts as an abscisic acid (ABA) negative regulator by mediating ASG2 farnesylation and consequently monitoring its subcellular localization. Involved in responses to salt (NaCl) and osmotic (e.g. in response to mannitol and PEG) stresses. In Arabidopsis thaliana (Mouse-ear cress), this protein is Protein farnesyltransferase subunit beta (FTB).